The sequence spans 258 residues: Cytochrome P450 1A2 (258 aa).

This sequence belongs to the cytochrome P450 family. Heme is required as a cofactor.

Its subcellular location is the endoplasmic reticulum membrane. The protein localises to the microsome membrane. It catalyses the reaction an organic molecule + reduced [NADPH--hemoprotein reductase] + O2 = an alcohol + oxidized [NADPH--hemoprotein reductase] + H2O + H(+). In terms of biological role, cytochromes P450 are a group of heme-thiolate monooxygenases. In liver microsomes, this enzyme is involved in an NADPH-dependent electron transport pathway. It oxidizes a variety of structurally unrelated compounds, including steroids, fatty acids, and xenobiotics. This is Cytochrome P450 1A2 (CYP1A2) from Gallus gallus (Chicken).